The sequence spans 330 residues: Peroxidase 42 (330 aa).

Positions 1–23 (MGGKGVMMVAILCLWALSATSEA) are cleaved as a signal peptide. Intrachain disulfides connect C40-C119, C73-C78, C125-C323, and C204-C231. Catalysis depends on H71, which acts as the Proton acceptor. Ca(2+) is bound by residues D72, V75, D79, and S81. P167 contacts substrate. N170 carries N-linked (GlcNAc...) asparagine glycosylation. Residue H197 participates in heme b binding. S198 provides a ligand contact to Ca(2+). 3 residues coordinate Ca(2+): D247, T250, and D255.

It belongs to the peroxidase family. Classical plant (class III) peroxidase subfamily. Heme b is required as a cofactor. The cofactor is Ca(2+). In terms of tissue distribution, constitutively expressed in the whole plant, with the highest expression in roots.

It localises to the secreted. It catalyses the reaction 2 a phenolic donor + H2O2 = 2 a phenolic radical donor + 2 H2O. In terms of biological role, removal of H(2)O(2), oxidation of toxic reductants, biosynthesis and degradation of lignin, suberization, auxin catabolism, response to environmental stresses such as wounding, pathogen attack and oxidative stress. These functions might be dependent on each isozyme/isoform in each plant tissue. Might function as heat shock-like defense protein. The chain is Peroxidase 42 (PER42) from Arabidopsis thaliana (Mouse-ear cress).